A 282-amino-acid polypeptide reads, in one-letter code: Protein NEOXANTHIN-DEFICIENT 1 (282 aa).

Required for neoxanthin biosynthesis. Probably not involved directly in the enzymatic conversion of violaxanthin to neoxanthin. Is necessary but not sufficient for neoxanthin synthesis. The protein is Protein NEOXANTHIN-DEFICIENT 1 of Arabidopsis thaliana (Mouse-ear cress).